The primary structure comprises 402 residues: 1-deoxy-D-xylulose 5-phosphate reductoisomerase (402 aa).

Threonine 21, glycine 22, serine 23, isoleucine 24, glycine 47, asparagine 50, and asparagine 127 together coordinate NADPH. Lysine 128 provides a ligand contact to 1-deoxy-D-xylulose 5-phosphate. Glutamate 129 lines the NADPH pocket. Position 151 (aspartate 151) interacts with Mn(2+). 1-deoxy-D-xylulose 5-phosphate-binding residues include serine 152, glutamate 153, serine 177, and histidine 200. Glutamate 153 is a binding site for Mn(2+). Residue glycine 206 participates in NADPH binding. 1-deoxy-D-xylulose 5-phosphate is bound by residues serine 213, asparagine 218, lysine 219, and glutamate 222. Glutamate 222 provides a ligand contact to Mn(2+).

This sequence belongs to the DXR family. Requires Mg(2+) as cofactor. The cofactor is Mn(2+).

It carries out the reaction 2-C-methyl-D-erythritol 4-phosphate + NADP(+) = 1-deoxy-D-xylulose 5-phosphate + NADPH + H(+). It functions in the pathway isoprenoid biosynthesis; isopentenyl diphosphate biosynthesis via DXP pathway; isopentenyl diphosphate from 1-deoxy-D-xylulose 5-phosphate: step 1/6. Its function is as follows. Catalyzes the NADPH-dependent rearrangement and reduction of 1-deoxy-D-xylulose-5-phosphate (DXP) to 2-C-methyl-D-erythritol 4-phosphate (MEP). This Mycobacterium ulcerans (strain Agy99) protein is 1-deoxy-D-xylulose 5-phosphate reductoisomerase.